A 453-amino-acid polypeptide reads, in one-letter code: MSQSPKVGFVSLGCPKALVDSEQIITQLRAEGYEISGTYDGADLVVVNTCGFIDEAVQESLDAIGEALTENGKVIVTGCLGAKSSASGSNLIEEVHPKVLAVTGPHAVGEVMQAVHSHLPKPHDPFVDLVPAAGIKLTPRHYAYLKISEGCNHRCTFCIIPSMRGDLVSRPVAEVMLEAENLFKSGVKELLVISQDTSAYGVDVKYRTGFWNGKPIKTRMTDLVAALGELAAQYGAWVRLHYVYPYPSVDEVIPLMADGPFKGHVLPYLDVPFQHAHPEVLKRMKRPANAEKVLERVQKWREICPDLTIRSTFIAGFPGETEEQFETLLDFIREAELDRVGCFAYSPVEGASANELDGALPDDVREERRARFMEVAEEVSAQRIQRKVGKTLKVLIDEVSAEGGIGRTAADAPEIDGVVYVEPATKASKRYKVGDFVSVKITGADGHDLWGEV.

In terms of domain architecture, MTTase N-terminal spans proline 5–proline 120. [4Fe-4S] cluster contacts are provided by cysteine 14, cysteine 50, cysteine 79, cysteine 151, cysteine 155, and cysteine 158. A Radical SAM core domain is found at leucine 137–glutamine 382. Residues glutamine 385–valine 453 enclose the TRAM domain.

The protein belongs to the methylthiotransferase family. RimO subfamily. It depends on [4Fe-4S] cluster as a cofactor.

The protein resides in the cytoplasm. It carries out the reaction L-aspartate(89)-[ribosomal protein uS12]-hydrogen + (sulfur carrier)-SH + AH2 + 2 S-adenosyl-L-methionine = 3-methylsulfanyl-L-aspartate(89)-[ribosomal protein uS12]-hydrogen + (sulfur carrier)-H + 5'-deoxyadenosine + L-methionine + A + S-adenosyl-L-homocysteine + 2 H(+). Its function is as follows. Catalyzes the methylthiolation of an aspartic acid residue of ribosomal protein uS12. The chain is Ribosomal protein uS12 methylthiotransferase RimO from Burkholderia ambifaria (strain ATCC BAA-244 / DSM 16087 / CCUG 44356 / LMG 19182 / AMMD) (Burkholderia cepacia (strain AMMD)).